Reading from the N-terminus, the 97-residue chain is Aspartyl/glutamyl-tRNA(Asn/Gln) amidotransferase subunit C (97 aa).

It belongs to the GatC family. As to quaternary structure, heterotrimer of A, B and C subunits.

It carries out the reaction L-glutamyl-tRNA(Gln) + L-glutamine + ATP + H2O = L-glutaminyl-tRNA(Gln) + L-glutamate + ADP + phosphate + H(+). The catalysed reaction is L-aspartyl-tRNA(Asn) + L-glutamine + ATP + H2O = L-asparaginyl-tRNA(Asn) + L-glutamate + ADP + phosphate + 2 H(+). Allows the formation of correctly charged Asn-tRNA(Asn) or Gln-tRNA(Gln) through the transamidation of misacylated Asp-tRNA(Asn) or Glu-tRNA(Gln) in organisms which lack either or both of asparaginyl-tRNA or glutaminyl-tRNA synthetases. The reaction takes place in the presence of glutamine and ATP through an activated phospho-Asp-tRNA(Asn) or phospho-Glu-tRNA(Gln). The protein is Aspartyl/glutamyl-tRNA(Asn/Gln) amidotransferase subunit C of Prochlorococcus marinus (strain MIT 9313).